The primary structure comprises 825 residues: Cell division cycle protein 27 homolog (825 aa).

TPR repeat units lie at residues 6–35 (EPVQ…YAEV), 38–65 (EEAL…KGHS), 67–99 (TTPQ…VFNK), and 115–145 (CFTL…LSLN). Phosphothreonine is present on residues T205, T209, and T244. S291 bears the Phosphoserine mark. The segment at 305–423 (SSVIDVPPTG…TNKGGITQPN (119 aa)) is disordered. At T313 the chain carries Phosphothreonine. The segment covering 326 to 341 (QTGTKSVFSQSGNSRE) has biased composition (polar residues). S339 carries the phosphoserine modification. Residues 349–362 (QTQSSGPQTSTTPQ) show a composition bias toward low complexity. Over residues 363–372 (VLSPTITSPP) the composition is skewed to polar residues. T367 is subject to Phosphothreonine. 2 positions are modified to phosphoserine: S380 and S387. Over residues 381-391 (RLFTSDSSTTK) the composition is skewed to polar residues. A compositionally biased stretch (basic residues) spans 396–414 (KLKMKFPPKIPNRKTKSKT). S427 bears the Phosphoserine mark. At T431 the chain carries Phosphothreonine. Residues S436 and S439 each carry the phosphoserine modification. A Phosphothreonine modification is found at T447. TPR repeat units lie at residues 465–495 (SLLR…LPSH), 499–528 (TGWV…EVRR), 533–563 (RVEG…LTDM), 567–598 (SPEA…IQVD), 601–631 (YAYA…AIRV), 635–667 (HYNA…DINP), 670–702 (SVLL…IDPK), 704–734 (PLCK…KQIV), and 737–768 (ESLV…MDLD). The segment at 782–825 (KRYLPDDEEPITQEEQIMGTDESQESSMTDADDTQLHAAESDEF) is disordered. S822 bears the Phosphoserine mark.

It belongs to the APC3/CDC27 family. As to quaternary structure, homodimer. The mammalian APC/C is composed at least of 14 distinct subunits ANAPC1, ANAPC2, CDC27/APC3, ANAPC4, ANAPC5, CDC16/APC6, ANAPC7, CDC23/APC8, ANAPC10, ANAPC11, CDC26/APC12, ANAPC13, ANAPC15 and ANAPC16 that assemble into a complex of at least 19 chains with a combined molecular mass of around 1.2 MDa; APC/C interacts with FZR1 and FBXO5. Interacts with RB. Interacts with FAM168B/MANI. Interacts with MCPH1. In terms of processing, phosphorylated. Phosphorylation on Ser-427 and Thr-447 occurs specifically during mitosis.

Its subcellular location is the nucleus. The protein resides in the cytoplasm. It localises to the cytoskeleton. The protein localises to the spindle. The protein operates within protein modification; protein ubiquitination. Functionally, component of the anaphase promoting complex/cyclosome (APC/C), a cell cycle-regulated E3 ubiquitin ligase that controls progression through mitosis and the G1 phase of the cell cycle. The APC/C complex acts by mediating ubiquitination and subsequent degradation of target proteins: it mainly mediates the formation of 'Lys-11'-linked polyubiquitin chains and, to a lower extent, the formation of 'Lys-48'- and 'Lys-63'-linked polyubiquitin chains. The APC/C complex catalyzes assembly of branched 'Lys-11'-/'Lys-48'-linked branched ubiquitin chains on target proteins. This Bos taurus (Bovine) protein is Cell division cycle protein 27 homolog (CDC27).